Here is a 146-residue protein sequence, read N- to C-terminus: Protein phosphatase 1 regulatory subunit 14D (146 aa).

The span at 1–16 (MLSSSAASCTSPNPDT) shows a compositional bias: polar residues. A disordered region spans residues 1–57 (MLSSSAASCTSPNPDTDNPDKKVRWSSEKRRRASSTDSESKTHLDISKLPRSRRPSR). Basic and acidic residues-rich tracts occupy residues 18–28 (NPDKKVRWSSE) and 38–48 (SESKTHLDISK). Positions 21–25 (KKVRW) are interaction with protein phosphatase 1.

The protein belongs to the PP1 inhibitor family. Post-translationally, phosphorylated on several residues.

The protein resides in the cytoplasm. In terms of biological role, inhibitor of PPP1CA. Has inhibitory activity only when phosphorylated, creating a molecular switch for regulating the phosphorylation status of PPP1CA substrates and smooth muscle contraction. This Rattus norvegicus (Rat) protein is Protein phosphatase 1 regulatory subunit 14D (Ppp1r14d).